Here is a 544-residue protein sequence, read N- to C-terminus: Methionine--tRNA ligase (544 aa).

The 'HIGH' region motif lies at 10–20 (PYANGSLHLGH). Zn(2+) contacts are provided by cysteine 141, cysteine 144, cysteine 153, and cysteine 156. The short motif at 329-333 (KLSTS) is the 'KMSKS' region element. Threonine 332 provides a ligand contact to ATP.

The protein belongs to the class-I aminoacyl-tRNA synthetase family. MetG type 1 subfamily. Monomer. Zn(2+) is required as a cofactor.

Its subcellular location is the cytoplasm. The enzyme catalyses tRNA(Met) + L-methionine + ATP = L-methionyl-tRNA(Met) + AMP + diphosphate. Functionally, is required not only for elongation of protein synthesis but also for the initiation of all mRNA translation through initiator tRNA(fMet) aminoacylation. The polypeptide is Methionine--tRNA ligase (Bacillus cereus (strain G9842)).